The sequence spans 637 residues: DNA mismatch repair protein MutL (637 aa).

Disordered regions lie at residues D352–F384 and A405–Q430.

The protein belongs to the DNA mismatch repair MutL/HexB family.

In terms of biological role, this protein is involved in the repair of mismatches in DNA. It is required for dam-dependent methyl-directed DNA mismatch repair. May act as a 'molecular matchmaker', a protein that promotes the formation of a stable complex between two or more DNA-binding proteins in an ATP-dependent manner without itself being part of a final effector complex. The sequence is that of DNA mismatch repair protein MutL from Halalkalibacterium halodurans (strain ATCC BAA-125 / DSM 18197 / FERM 7344 / JCM 9153 / C-125) (Bacillus halodurans).